The primary structure comprises 304 residues: Probable intron-encoded endonuclease 1 (304 aa).

The GIY-YIG domain maps to 84-175 (DKGGIYSFIN…RFNFDNLYNF (92 aa)).

It to endonucleases of group I introns of fungi and phage.

The protein resides in the mitochondrion. Functionally, mitochondrial DNA endonuclease involved in intron homing. In Neurospora crassa (strain ATCC 24698 / 74-OR23-1A / CBS 708.71 / DSM 1257 / FGSC 987), this protein is Probable intron-encoded endonuclease 1.